The primary structure comprises 154 residues: SsrA-binding protein (154 aa).

This sequence belongs to the SmpB family.

The protein localises to the cytoplasm. Functionally, required for rescue of stalled ribosomes mediated by trans-translation. Binds to transfer-messenger RNA (tmRNA), required for stable association of tmRNA with ribosomes. tmRNA and SmpB together mimic tRNA shape, replacing the anticodon stem-loop with SmpB. tmRNA is encoded by the ssrA gene; the 2 termini fold to resemble tRNA(Ala) and it encodes a 'tag peptide', a short internal open reading frame. During trans-translation Ala-aminoacylated tmRNA acts like a tRNA, entering the A-site of stalled ribosomes, displacing the stalled mRNA. The ribosome then switches to translate the ORF on the tmRNA; the nascent peptide is terminated with the 'tag peptide' encoded by the tmRNA and targeted for degradation. The ribosome is freed to recommence translation, which seems to be the essential function of trans-translation. This chain is SsrA-binding protein, found in Enterococcus hirae (strain ATCC 9790 / DSM 20160 / JCM 8729 / LMG 6399 / NBRC 3181 / NCIMB 6459 / NCDO 1258 / NCTC 12367 / WDCM 00089 / R).